Consider the following 79-residue polypeptide: Crassicorin-I (79 aa).

An N-terminal signal peptide occupies residues 1-19; sequence MKLFLVSIVLVGMLVLAAA. The propeptide occupies 20–39; it reads RPERDIDSFDEQEEKGFVKR. 3 disulfides stabilise this stretch: C43–C76, C45–C69, and C59–C77.

The protein belongs to the sea anemone type 3 (BDS) potassium channel toxin family. In terms of tissue distribution, highly expressed by the mesenteries. Moderately expressed by the pharynx. Weakly expressed by the gonad and pedal disk. No expression in tentacle.

The protein resides in the secreted. The protein localises to the nematocyst. Peptide with both antimicrobial and neurotoxin activities. Cationic AMP with antibacterial activity against both Gram-positive bacteria (B.subtilis, MIC=11.49 ug/mL) and Gram-negative bacteria (E.coli (MIC=12.21 ug/mL) and S.enterica (MIC=11.95 ug/mL)). Shows no significant antimicrobial activity against bacteria S.aureus and P.aeruginosa, as well as the fungus C.albicans. In vivo, induces reversible paralytic activity towards the shrimp P.paucidens. May act by impairing sodium or potassium channels in the prey. This Urticina crassicornis (Mottled anemone) protein is Crassicorin-I.